We begin with the raw amino-acid sequence, 2245 residues long: Myosin-J heavy chain (2245 aa).

In terms of domain architecture, Myosin N-terminal SH3-like spans 25–77; it reads QEGAGVWIPDQELGWIGADVIEHSETSADQVLVRTEDDREVKIPLSKVFQKNP. The Myosin motor domain maps to 81–821; the sequence is EGVDDLSFLS…QLASLEDMRL (741 aa). ATP is bound at residue 174–181; sequence GESGAGKT. The interval 646-672 is disordered; sequence FTQSPGGHPQGNGGPTSSNTKGTSGSS. Low complexity predominate over residues 660 to 672; the sequence is PTSSNTKGTSGSS. The segment at 669–749 is actin-binding; it reads SGSSSMKFLS…GFPTRRLLSE (81 aa). IQ domains follow at residues 824-851, 872-901, and 943-972; these read LDRS…RDAS, RTHS…ASLQ, and KLRG…EARS. The stretch at 973–1812 forms a coiled coil; sequence LRTVQEQKNK…NYHMLEDRME (840 aa). A disordered region spans residues 1504-1524; sequence KKQLTQLQQQHEQSSTQLLLA. Over residues 1506–1523 the composition is skewed to low complexity; the sequence is QLTQLQQQHEQSSTQLLL. A Dilute domain is found at 1969–2188; it reads IDFIDQLQQS…IASICPPNKS (220 aa).

Belongs to the TRAFAC class myosin-kinesin ATPase superfamily. Myosin family. Homodimer that associates with six light chains.

The protein localises to the contractile vacuole. Processive motor protein that can move over long distances along F-actin without disassociating; processiveness depends on high physiological Mg(2+) concentrations. Presents a high actin affinity in the presence of ADP, fast ATP hydrolysis, and a high steady-state ATPase activity in the presence of actin that is rate limited by ADP release. Physiological decrease of free Mg(2+) ions leads to an increased rate of ADP release and shortening of the fraction of time it spends in the strong acting binding states. This is Myosin-J heavy chain (myoJ) from Dictyostelium discoideum (Social amoeba).